We begin with the raw amino-acid sequence, 463 residues long: Cysteine--tRNA ligase (463 aa).

Cys-29 serves as a coordination point for Zn(2+). Residues Pro-31 to Asn-41 carry the 'HIGH' region motif. Zn(2+)-binding residues include Cys-227, His-252, and Glu-256. The 'KMSKS' region signature appears at Lys-285–Ser-289. Lys-288 lines the ATP pocket.

The protein belongs to the class-I aminoacyl-tRNA synthetase family. As to quaternary structure, monomer. The cofactor is Zn(2+).

The protein localises to the cytoplasm. The enzyme catalyses tRNA(Cys) + L-cysteine + ATP = L-cysteinyl-tRNA(Cys) + AMP + diphosphate. The protein is Cysteine--tRNA ligase of Rhodopseudomonas palustris (strain BisB5).